We begin with the raw amino-acid sequence, 303 residues long: Phytochrome-associated serine/threonine-protein phosphatase (303 aa).

4 residues coordinate Zn(2+): Asp50, His52, Asp78, and Asn110. His111 acts as the Proton donor in catalysis. Residues His160 and His234 each contribute to the Zn(2+) site.

The protein belongs to the PPP phosphatase family. PP-6 (PP-V) subfamily. In terms of assembly, interacts with PHYA and PHYB, mostly when they are phosphorylated and in Pfr forms. Zn(2+) serves as cofactor. As to expression, mostly expressed in flowers and stems.

Its subcellular location is the cytoplasm. It catalyses the reaction O-phospho-L-seryl-[protein] + H2O = L-seryl-[protein] + phosphate. It carries out the reaction O-phospho-L-threonyl-[protein] + H2O = L-threonyl-[protein] + phosphate. Functionally, catalytic subunit of protein phosphatase 6 (PP6). Dephosphorylates phosphorylated phytochromes, with a preference toward Pfr forms. Plays a major role in the photoperiodic control of flowering time in long days by modulating phytochrome signals in flowering time control. In Pisum sativum (Garden pea), this protein is Phytochrome-associated serine/threonine-protein phosphatase.